A 32-amino-acid polypeptide reads, in one-letter code: Alpha-amylase inhibitor AAI (32 aa).

Disulfide bonds link Cys-1/Cys-18, Cys-8/Cys-23, and Cys-17/Cys-31.

Endosperm.

In terms of biological role, alpha-amylase inhibitor. It is active against alpha-amylases from Tribolium castaneum and Prostephanus truncatus larvae. This Amaranthus hypochondriacus (Prince-of-Wales feather) protein is Alpha-amylase inhibitor AAI (AAI).